Reading from the N-terminus, the 212-residue chain is Peroxisomal membrane protein 4 (212 aa).

2 helical membrane-spanning segments follow: residues 97–117 and 153–173; these read GKTYQAHSFVSAFIGGLLVFG and LDPFPWFSGLVWGLVLWLFEY. An N-linked (GlcNAc...) asparagine glycan is attached at asparagine 206.

It belongs to the peroxisomal membrane protein PXMP2/4 family. As to quaternary structure, interacts with PEX19.

The protein resides in the peroxisome membrane. The protein is Peroxisomal membrane protein 4 (PXMP4) of Bos taurus (Bovine).